The sequence spans 251 residues: Triosephosphate isomerase (251 aa).

Asn-9–Lys-11 contacts substrate. Catalysis depends on His-95, which acts as the Electrophile. Glu-167 acts as the Proton acceptor in catalysis. Substrate contacts are provided by residues Gly-173, Ser-213, and Gly-234–Gly-235. The residue at position 213 (Ser-213) is a Phosphoserine.

The protein belongs to the triosephosphate isomerase family. Homodimer.

It localises to the cytoplasm. It carries out the reaction D-glyceraldehyde 3-phosphate = dihydroxyacetone phosphate. It functions in the pathway carbohydrate biosynthesis; gluconeogenesis. Its pathway is carbohydrate degradation; glycolysis; D-glyceraldehyde 3-phosphate from glycerone phosphate: step 1/1. In terms of biological role, involved in the gluconeogenesis. Catalyzes stereospecifically the conversion of dihydroxyacetone phosphate (DHAP) to D-glyceraldehyde-3-phosphate (G3P). This chain is Triosephosphate isomerase, found in Bacillus cytotoxicus (strain DSM 22905 / CIP 110041 / 391-98 / NVH 391-98).